The chain runs to 416 residues: Phosphatidylserine decarboxylase proenzyme, mitochondrial (416 aa).

The Mitochondrial matrix segment spans residues 1–67 (MPGKSTRPLP…GRLHFPQLAL (67 aa)). Residues 68–86 (RRRLGQLSCMSKPALKLRS) traverse the membrane as a helical segment. Over 87 to 416 (WPLTVLYYLL…IRFGEALGSL (330 aa)) the chain is Mitochondrial intermembrane. Active-site charge relay system; for autoendoproteolytic cleavage activity residues include Asp198, His274, and Ser385. The Schiff-base intermediate with substrate; via pyruvic acid; for decarboxylase activity role is filled by Ser385. Position 385 is a pyruvic acid (Ser); by autocatalysis (Ser385).

This sequence belongs to the phosphatidylserine decarboxylase family. PSD-B subfamily. Eukaryotic type I sub-subfamily. Heterodimer of a large membrane-associated beta subunit and a small pyruvoyl-containing alpha subunit. It depends on pyruvate as a cofactor. Post-translationally, is synthesized initially as an inactive proenzyme. Formation of the active enzyme involves a self-maturation process in which the active site pyruvoyl group is generated from an internal serine residue via an autocatalytic post-translational modification. Two non-identical subunits are generated from the proenzyme in this reaction, and the pyruvate is formed at the N-terminus of the alpha chain, which is derived from the carboxyl end of the proenzyme. The autoendoproteolytic cleavage occurs by a canonical serine protease mechanism, in which the side chain hydroxyl group of the serine supplies its oxygen atom to form the C-terminus of the beta chain, while the remainder of the serine residue undergoes an oxidative deamination to produce ammonia and the pyruvoyl prosthetic group on the alpha chain. During this reaction, the Ser that is part of the protease active site of the proenzyme becomes the pyruvoyl prosthetic group, which constitutes an essential element of the active site of the mature decarboxylase.

It localises to the mitochondrion inner membrane. It is found in the cytoplasm. The protein resides in the lipid droplet. It catalyses the reaction a 1,2-diacyl-sn-glycero-3-phospho-L-serine + H(+) = a 1,2-diacyl-sn-glycero-3-phosphoethanolamine + CO2. Its pathway is phospholipid metabolism; phosphatidylethanolamine biosynthesis. Functionally, catalyzes the formation of phosphatidylethanolamine (PtdEtn) from phosphatidylserine (PtdSer). Plays a central role in phospholipid metabolism and in the interorganelle trafficking of phosphatidylserine. May be involved in lipid droplet biogenesis at the endoplasmic reticulum membrane. This chain is Phosphatidylserine decarboxylase proenzyme, mitochondrial, found in Bos taurus (Bovine).